The chain runs to 240 residues: MEVLIHKSVYYKIFDKTFNNSSHRYIQENHSINEAEILANIESITNYFKAQDILILNQVHSNQIVNADEHIVTIPEADGSITTKKNLVLTVQSADCVPVLLASDDGKIIGVAHAGWQGSINNIISNIVTKMIEKGAKNLIAVIGPAIAQSSYEVDDKYYKTFLSKDINNKRFFINSIKENHYMFDLPAFVELKLNESGVKDIKNITEDTYTNPSKYPSKRRSYHMQVPYNEKILSAIVIK.

Zn(2+) is bound by residues His60, Cys96, and His113.

The protein belongs to the purine nucleoside phosphorylase YfiH/LACC1 family. As to quaternary structure, homodimer. The cofactor is Cu(2+). Requires Zn(2+) as cofactor.

The catalysed reaction is adenosine + phosphate = alpha-D-ribose 1-phosphate + adenine. It catalyses the reaction S-methyl-5'-thioadenosine + phosphate = 5-(methylsulfanyl)-alpha-D-ribose 1-phosphate + adenine. The enzyme catalyses inosine + phosphate = alpha-D-ribose 1-phosphate + hypoxanthine. It carries out the reaction adenosine + H2O + H(+) = inosine + NH4(+). In terms of biological role, purine nucleoside enzyme that catalyzes the phosphorolysis of adenosine and inosine nucleosides, yielding D-ribose 1-phosphate and the respective free bases, adenine and hypoxanthine. Also catalyzes the phosphorolysis of S-methyl-5'-thioadenosine into adenine and S-methyl-5-thio-alpha-D-ribose 1-phosphate. Also has adenosine deaminase activity. This chain is Purine nucleoside phosphorylase RP494, found in Rickettsia prowazekii (strain Madrid E).